Reading from the N-terminus, the 120-residue chain is U-scoloptoxin(16)-Er2a (120 aa).

A signal peptide spans 1-26; sequence MNTVSVVQFLAVGCAVFVLYGRGVFA.

This sequence belongs to the scoloptoxin-16 family. Contains 4 disulfide bonds. As to expression, expressed by the venom gland.

It localises to the secreted. In Ethmostigmus rubripes (Giant centipede), this protein is U-scoloptoxin(16)-Er2a.